A 72-amino-acid chain; its full sequence is Sec-independent protein translocase protein TatA (72 aa).

Residues 1–21 traverse the membrane as a helical segment; that stretch reads MGSFSIWHWLIVLAVVLLLFG. The disordered stretch occupies residues 43-72; the sequence is MADEDAKEDPRTIDAKAEEPVKDVKKTTKS. Basic and acidic residues predominate over residues 50–72; sequence EDPRTIDAKAEEPVKDVKKTTKS.

The protein belongs to the TatA/E family. The Tat system comprises two distinct complexes: a TatABC complex, containing multiple copies of TatA, TatB and TatC subunits, and a separate TatA complex, containing only TatA subunits. Substrates initially bind to the TatABC complex, which probably triggers association of the separate TatA complex to form the active translocon.

It localises to the cell inner membrane. In terms of biological role, part of the twin-arginine translocation (Tat) system that transports large folded proteins containing a characteristic twin-arginine motif in their signal peptide across membranes. TatA could form the protein-conducting channel of the Tat system. In Brucella suis biovar 1 (strain 1330), this protein is Sec-independent protein translocase protein TatA.